The sequence spans 414 residues: tRNA (guanine-N(7)-)-methyltransferase non-catalytic subunit WDR4 (414 aa).

The residue at position 2 (alanine 2) is an N-acetylalanine. WD repeat units follow at residues 60–99 (QGSDTVLASTFSKSGSYFVLTDDSKRLILFRTNPWQCLSV), 101–140 (TVVRRCTALTFTASEEKILVADKSGDVYSFSVLEPHGGGR), 144–184 (GHLS…IESF), and 187–227 (GHTE…ELHC). Positions 377–414 (EERLQQQLEKKRRQAPPPGPNGPTKKMRAGELAQGCSS) are disordered.

The protein belongs to the WD repeat TRM82 family. Non-catalytic component of the METTL1-WDR4 complex, composed of METTL1 and WDR4. Interacts with FEN1; the interaction is direct.

Its subcellular location is the nucleus. It is found in the chromosome. The protein operates within tRNA modification; N(7)-methylguanine-tRNA biosynthesis. In terms of biological role, non-catalytic component of the METTL1-WDR4 methyltransferase complex required for the formation of N(7)-methylguanine in a subset of RNA species, such as tRNAs, mRNAs and microRNAs (miRNAs). In the METTL1-WDR4 methyltransferase complex, WDR4 acts as a scaffold for tRNA-binding. Required for the formation of N(7)-methylguanine at position 46 (m7G46) in a large subset of tRNAs that contain the 5'-RAGGU-3' motif within the variable loop. M7G46 interacts with C13-G22 in the D-loop to stabilize tRNA tertiary structure and protect tRNAs from decay. Also required for the formation of N(7)-methylguanine at internal sites in a subset of mRNAs. Also required for methylation of a specific subset of miRNAs, such as let-7. Independently of METTL1, also plays a role in genome stability: localizes at the DNA replication site and regulates endonucleolytic activities of FEN1. This chain is tRNA (guanine-N(7)-)-methyltransferase non-catalytic subunit WDR4, found in Bos taurus (Bovine).